Here is a 197-residue protein sequence, read N- to C-terminus: MYAYLKGIITKITAKYIVLETNGIGYILHVANPYAYSGQVNQEAQIYVHQVVREDAHLLYGFRSEDEKKLFLSLISVSGIGPVSALAIIAADDNAGLVQAIETKNITYLTKFPKIGKKTAQQMVLDLEGKVVVAGDDLPAKVAVQASAENQELEEAMEAMLALGYKATELKKIKKFFEGTTDTAENYIKSALKMLVK.

Residues 1-63 (MYAYLKGIIT…EDAHLLYGFR (63 aa)) are domain I. The segment at 64–142 (SEDEKKLFLS…VAGDDLPAKV (79 aa)) is domain II. The tract at residues 143-147 (AVQAS) is flexible linker. The interval 148–197 (AENQELEEAMEAMLALGYKATELKKIKKFFEGTTDTAENYIKSALKMLVK) is domain III.

This sequence belongs to the RuvA family. In terms of assembly, homotetramer. Forms an RuvA(8)-RuvB(12)-Holliday junction (HJ) complex. HJ DNA is sandwiched between 2 RuvA tetramers; dsDNA enters through RuvA and exits via RuvB. An RuvB hexamer assembles on each DNA strand where it exits the tetramer. Each RuvB hexamer is contacted by two RuvA subunits (via domain III) on 2 adjacent RuvB subunits; this complex drives branch migration. In the full resolvosome a probable DNA-RuvA(4)-RuvB(12)-RuvC(2) complex forms which resolves the HJ.

The protein resides in the cytoplasm. Functionally, the RuvA-RuvB-RuvC complex processes Holliday junction (HJ) DNA during genetic recombination and DNA repair, while the RuvA-RuvB complex plays an important role in the rescue of blocked DNA replication forks via replication fork reversal (RFR). RuvA specifically binds to HJ cruciform DNA, conferring on it an open structure. The RuvB hexamer acts as an ATP-dependent pump, pulling dsDNA into and through the RuvAB complex. HJ branch migration allows RuvC to scan DNA until it finds its consensus sequence, where it cleaves and resolves the cruciform DNA. The polypeptide is Holliday junction branch migration complex subunit RuvA (Streptococcus pneumoniae (strain Hungary19A-6)).